Here is a 138-residue protein sequence, read N- to C-terminus: Protein PsiE homolog (138 aa).

A run of 4 helical transmembrane segments spans residues 14-34, 56-76, 84-104, and 109-129; these read LQAL…GLLI, YEML…ALII, HFPL…LIII, and AIST…FFIV.

Belongs to the PsiE family.

The protein localises to the cell membrane. This is Protein PsiE homolog from Bacillus velezensis (strain DSM 23117 / BGSC 10A6 / LMG 26770 / FZB42) (Bacillus amyloliquefaciens subsp. plantarum).